We begin with the raw amino-acid sequence, 424 residues long: ATP-sensitive inward rectifier potassium channel 8 (424 aa).

The Cytoplasmic portion of the chain corresponds to 1-69; it reads MLARKSIIPE…IFTTLVDLKW (69 aa). Residue S6 is modified to Phosphoserine. A helical membrane pass occupies residues 70-94; sequence RHTLVIFTMSFLCSWLLFAIMWWLV. Topologically, residues 95 to 126 are extracellular; sequence AFAHGDIYAYMEKSGMEKSGLESTVCVTNVRS. The helical; Pore-forming intramembrane region spans 127 to 138; the sequence is FTSAFLFSIEVQ. An intramembrane region (pore-forming) is located at residues 139-145; that stretch reads VTIGFGG. Residues 140–145 carry the Selectivity filter motif; sequence TIGFGG. The Extracellular portion of the chain corresponds to 146–154; that stretch reads RMMTEECPL. Residues 155–176 traverse the membrane as a helical segment; the sequence is AITVLILQNIVGLIINAVMLGC. Over 177-424 the chain is Cytoplasmic; the sequence is IFMKTAQAHR…PEGNQNTSES (248 aa). Positions 375–424 are disordered; it reads SHQNSLRKRNSMRRNNSMRRNNSIRRNNSSLMVPKVQFMTPEGNQNTSES. The segment covering 387–404 has biased composition (low complexity); the sequence is RRNNSMRRNNSIRRNNSS.

The protein belongs to the inward rectifier-type potassium channel (TC 1.A.2.1) family. KCNJ8 subfamily. As to quaternary structure, interacts with ABCC9. As to expression, predominantly detected in fetal and adult heart.

The protein localises to the membrane. It catalyses the reaction K(+)(in) = K(+)(out). Inward rectifier potassium channels are characterized by a greater tendency to allow potassium to flow into the cell rather than out of it. Their voltage dependence is regulated by the concentration of extracellular potassium; as external potassium is raised, the voltage range of the channel opening shifts to more positive voltages. The inward rectification is mainly due to the blockage of outward current by internal magnesium. This channel is activated by internal ATP and can be blocked by external barium. Can form a sulfonylurea-sensitive but ATP-insensitive potassium channel with ABCC9. This chain is ATP-sensitive inward rectifier potassium channel 8 (KCNJ8), found in Homo sapiens (Human).